The sequence spans 471 residues: MLLYLADVVIFSHAKVYMEKIEKKNNSLKKFHIKTYGCQMNVYDSEMIEKIVSGLGFTLSERAEDADLIILNTCNIREKAAEKLYSELGQIRLLQKKKQERILIVVAGCVAQAEGEEIMRRAENVDVVVGPQSIHSLPELIAKVNRQSGKAIKMEFDPIEKFDYLAEETRKRRVPQSSAFLSIQEGCDKFCAFCVVPYTRGAEYSRSTEEVYREALSLTTKGVKEITLLGQNVNGYHGTLDSGNKVLNLGQLISRLGKIPSLKRIRYTTSHPVDMHKELYDAHANESKLMPFVHLPVQSGSDKILKQMNRKYTTADYLKIINEFQNARSDIAFSSDFIVGFPGESDDDFQQTLALIEQVNYAQCYSFKYSPRPGTPGATYPQISEETKNTRLQKLQQLLKEKQLEFNKKMIGKTVTVLFDKKHPDKISGRTEYMQQVFSDDSNLLDKIVTMRVEDASTFTLKCTAEDIIST.

In terms of domain architecture, MTTase N-terminal spans 29–146 (KKFHIKTYGC…LPELIAKVNR (118 aa)). [4Fe-4S] cluster-binding residues include C38, C74, C109, C187, C191, and C194. The region spanning 173–405 (RVPQSSAFLS…QQLLKEKQLE (233 aa)) is the Radical SAM core domain. The region spanning 408–467 (KKMIGKTVTVLFDKKHPDKISGRTEYMQQVFSDDSNLLDKIVTMRVEDASTFTLKCTAED) is the TRAM domain.

It belongs to the methylthiotransferase family. MiaB subfamily. In terms of assembly, monomer. [4Fe-4S] cluster serves as cofactor.

The protein localises to the cytoplasm. It carries out the reaction N(6)-dimethylallyladenosine(37) in tRNA + (sulfur carrier)-SH + AH2 + 2 S-adenosyl-L-methionine = 2-methylsulfanyl-N(6)-dimethylallyladenosine(37) in tRNA + (sulfur carrier)-H + 5'-deoxyadenosine + L-methionine + A + S-adenosyl-L-homocysteine + 2 H(+). Its function is as follows. Catalyzes the methylthiolation of N6-(dimethylallyl)adenosine (i(6)A), leading to the formation of 2-methylthio-N6-(dimethylallyl)adenosine (ms(2)i(6)A) at position 37 in tRNAs that read codons beginning with uridine. The polypeptide is tRNA-2-methylthio-N(6)-dimethylallyladenosine synthase (Neorickettsia sennetsu (strain ATCC VR-367 / Miyayama) (Ehrlichia sennetsu)).